Here is a 512-residue protein sequence, read N- to C-terminus: 2,3-bisphosphoglycerate-independent phosphoglycerate mutase (512 aa).

Aspartate 14 and serine 64 together coordinate Mn(2+). The active-site Phosphoserine intermediate is serine 64. Substrate is bound by residues histidine 125, 155–156 (RD), arginine 187, arginine 193, 259–262 (RADR), and lysine 332. Mn(2+) contacts are provided by aspartate 399, histidine 403, aspartate 440, histidine 441, and histidine 459.

The protein belongs to the BPG-independent phosphoglycerate mutase family. Monomer. Mn(2+) serves as cofactor.

The enzyme catalyses (2R)-2-phosphoglycerate = (2R)-3-phosphoglycerate. The protein operates within carbohydrate degradation; glycolysis; pyruvate from D-glyceraldehyde 3-phosphate: step 3/5. Catalyzes the interconversion of 2-phosphoglycerate and 3-phosphoglycerate. This is 2,3-bisphosphoglycerate-independent phosphoglycerate mutase from Ruthia magnifica subsp. Calyptogena magnifica.